The following is a 758-amino-acid chain: 5-methyltetrahydropteroyltriglutamate--homocysteine methyltransferase (758 aa).

Residues 17-20 and K117 contribute to the 5-methyltetrahydropteroyltri-L-glutamate site; that span reads RELK. Residues 434–436 and E487 contribute to the L-homocysteine site; that span reads IGS. L-methionine is bound by residues 434-436 and E487; that span reads IGS. 5-methyltetrahydropteroyltri-L-glutamate contacts are provided by residues 518-519 and W564; that span reads RC. L-homocysteine is bound at residue D602. Residue D602 participates in L-methionine binding. E608 is a 5-methyltetrahydropteroyltri-L-glutamate binding site. Zn(2+) is bound by residues H644, C646, and E668. Catalysis depends on H697, which acts as the Proton donor. C729 is a Zn(2+) binding site.

It belongs to the vitamin-B12 independent methionine synthase family. The cofactor is Zn(2+).

The enzyme catalyses 5-methyltetrahydropteroyltri-L-glutamate + L-homocysteine = tetrahydropteroyltri-L-glutamate + L-methionine. It functions in the pathway amino-acid biosynthesis; L-methionine biosynthesis via de novo pathway; L-methionine from L-homocysteine (MetE route): step 1/1. Catalyzes the transfer of a methyl group from 5-methyltetrahydrofolate to homocysteine resulting in methionine formation. The protein is 5-methyltetrahydropteroyltriglutamate--homocysteine methyltransferase of Serratia proteamaculans (strain 568).